Consider the following 247-residue polypeptide: Thioredoxin reductase-like selenoprotein T homolog selt-1.1 (247 aa).

The N-terminal stretch at methionine 1–alanine 26 is a signal peptide. Cysteine 92 and cysteine 95 are disulfide-bonded.

It belongs to the SelWTH family. SELT subfamily. In terms of tissue distribution, broadly expressed in neurons of nervous system including ADL, ASH, ASI, ASJ, ASK and AWB amphid sensilla neurons, in epithelial cells including hypodermal, arcade, pharyngeal, vulval and rectal cells, and in somatic muscle cells of the head, neck and body wall, and non-striated pharyngeal muscles.

The protein localises to the endoplasmic reticulum. It catalyses the reaction [thioredoxin]-dithiol + NADP(+) = [thioredoxin]-disulfide + NADPH + H(+). In terms of biological role, probably has thioredoxin reductase-like oxidoreductase activity. Plays a role in regulating the oxidative stress response, and odorant and pathogenic bacteria avoidance behavior. This is Thioredoxin reductase-like selenoprotein T homolog selt-1.1 from Caenorhabditis elegans.